The following is a 548-amino-acid chain: (S)-beta-macrocarpene synthase (548 aa).

Mg(2+)-binding residues include aspartate 302 and aspartate 306. The substrate site is built by aspartate 302, aspartate 306, arginine 443, and asparagine 446. Positions 302-306 (DDTLD) match the DDXXD motif motif. 3 residues coordinate Mg(2+): asparagine 446, serine 450, and glutamate 454.

Belongs to the terpene synthase family. As to quaternary structure, monomer. The cofactor is Mg(2+). Mn(2+) serves as cofactor. As to expression, expressed in roots. Not detected in leaves, unless damaged by herbivory or infected by fungi.

The protein resides in the cytoplasm. It catalyses the reaction (S)-beta-bisabolene = (S)-beta-macrocarpene. It carries out the reaction (2E,6E)-farnesyl diphosphate = (S)-beta-bisabolene + diphosphate. The catalysed reaction is (2E)-geranyl diphosphate = (4S)-limonene + diphosphate. The enzyme catalyses (2E)-geranyl diphosphate = beta-myrcene + diphosphate. It catalyses the reaction (2E)-geranyl diphosphate = terpinolene + diphosphate. It carries out the reaction (2E)-geranyl diphosphate + H2O = (S)-linalool + diphosphate. It functions in the pathway secondary metabolite biosynthesis; terpenoid biosynthesis. Functionally, involved in the biosynthesis of the bicyclic sesquiterpene (S)-beta-macrocarpene. Can use both geranyl diphosphate and farnesyl diphosphate as substrate, but not geranylgeranyl diphosphate. Produces mainly (S)-beta-macrocarpene, but also smaller amounts of beta-bisabolene and (E)-beta-farnesene when used with farnesyl diphosphate as substrate. In the presence of geranyl diphosphate, produces the acyclic monoterpenes beta-myrcene and linalool along with minor amounts of the cyclic compounds limonene, alpha-thujene, sabinene and alpha-terpinolene. May be involved in plant defense. The sequence is that of (S)-beta-macrocarpene synthase from Zea mays (Maize).